A 431-amino-acid chain; its full sequence is 3-isopropylmalate dehydratase large subunit (431 aa).

[4Fe-4S] cluster contacts are provided by C300, C360, and C363.

This sequence belongs to the aconitase/IPM isomerase family. LeuC type 2 subfamily. In terms of assembly, heterodimer of LeuC and LeuD. [4Fe-4S] cluster serves as cofactor.

The enzyme catalyses (2R,3S)-3-isopropylmalate = (2S)-2-isopropylmalate. It functions in the pathway amino-acid biosynthesis; L-leucine biosynthesis; L-leucine from 3-methyl-2-oxobutanoate: step 2/4. Catalyzes the isomerization between 2-isopropylmalate and 3-isopropylmalate, via the formation of 2-isopropylmaleate. The protein is 3-isopropylmalate dehydratase large subunit of Sulfurihydrogenibium sp. (strain YO3AOP1).